The primary structure comprises 473 residues: Photosystem II CP43 reaction center protein (473 aa).

Positions M1 to E14 are excised as a propeptide. T15 bears the N-acetylthreonine mark. At T15 the chain carries Phosphothreonine. The next 5 helical transmembrane spans lie at L69–A93, L134–N155, K178–T200, K255–S275, and W291–A312. [CaMn4O5] cluster is bound at residue E367. A helical transmembrane segment spans residues R447 to P471.

It belongs to the PsbB/PsbC family. PsbC subfamily. In terms of assembly, PSII is composed of 1 copy each of membrane proteins PsbA, PsbB, PsbC, PsbD, PsbE, PsbF, PsbH, PsbI, PsbJ, PsbK, PsbL, PsbM, PsbT, PsbX, PsbY, PsbZ, Psb30/Ycf12, at least 3 peripheral proteins of the oxygen-evolving complex and a large number of cofactors. It forms dimeric complexes. The cofactor is Binds multiple chlorophylls and provides some of the ligands for the Ca-4Mn-5O cluster of the oxygen-evolving complex. It may also provide a ligand for a Cl- that is required for oxygen evolution. PSII binds additional chlorophylls, carotenoids and specific lipids..

Its subcellular location is the plastid. It is found in the chloroplast thylakoid membrane. One of the components of the core complex of photosystem II (PSII). It binds chlorophyll and helps catalyze the primary light-induced photochemical processes of PSII. PSII is a light-driven water:plastoquinone oxidoreductase, using light energy to abstract electrons from H(2)O, generating O(2) and a proton gradient subsequently used for ATP formation. The protein is Photosystem II CP43 reaction center protein of Chloranthus spicatus (Chulantree).